Consider the following 436-residue polypeptide: T-box transcription factor TBX6 (436 aa).

The disordered stretch occupies residues 67-87 (PLLPSALGPETAPPPPEALHS). Positions 100 to 273 (LWKEFSAVGT…ANPFAKGFRE (174 aa)) form a DNA-binding region, T-box. Over residues 275-284 (GRNCKRERDA) the composition is skewed to basic and acidic residues. Disordered stretches follow at residues 275 to 344 (GRNC…CGGP) and 360 to 383 (PSHL…APYS). Residues 332-344 (EAASASAPPCGGP) show a composition bias toward low complexity.

It localises to the nucleus. Functionally, T-box transcription factor that plays an essential role in the determination of the fate of axial stem cells: neural vs mesodermal. Acts in part by down-regulating, a specific enhancer (N1) of SOX2, to inhibit neural development. Seems to also play an essential role in left/right axis determination and acts through effects on Notch signaling around the node as well as through an effect on the morphology and motility of the nodal cilia. The protein is T-box transcription factor TBX6 (Tbx6) of Rattus norvegicus (Rat).